The chain runs to 548 residues: Sesquiterpene synthase 9 (548 aa).

3 residues coordinate Mg(2+): Asp300, Asp304, and Glu453. The DDXXD motif motif lies at 300–304 (DDTFD).

Belongs to the terpene synthase family. Tpsa subfamily. Mg(2+) serves as cofactor. It depends on Mn(2+) as a cofactor. Mostly expressed in stem and trichomes, to a lower extent in roots, leaves and flowers and, at low levels, in fruits.

It localises to the cytoplasm. The catalysed reaction is (2E,6E)-farnesyl diphosphate = germacrene C + diphosphate. The enzyme catalyses (2E)-geranyl diphosphate = terpinolene + diphosphate. It catalyses the reaction (2E)-geranyl diphosphate = limonene + diphosphate. It carries out the reaction (2E)-geranyl diphosphate = beta-myrcene + diphosphate. The catalysed reaction is (2Z,6Z)-farnesyl diphosphate = germacrene C + diphosphate. It functions in the pathway secondary metabolite biosynthesis; terpenoid biosynthesis. In terms of biological role, involved in the biosynthesis of germacrene C, one of the most abundant sesquiterpene in the leaf oil of tomato. Produces mainly germacrene C, but also smaller amounts of germacrene A, B and D when used with farnesyl diphosphate (FPP) as substrate; able to use both (2E,6E)-farnesyl diphosphate ((EE)-FPP) and (2Z,6Z)-farnesyl diphosphate ((ZZ)-FPP). No or low activity with geranylgeranyl diphosphate (GGPP). Can act with a low efficiency as a monoterpene synthase with geranyl diphosphate (GPP) as substrate, thus producing beta-myrcene, limonene and terpinolene. The sequence is that of Sesquiterpene synthase 9 from Solanum lycopersicum (Tomato).